Consider the following 333-residue polypeptide: Ribosome biogenesis regulatory protein homolog (333 aa).

Disordered regions lie at residues 227-248 and 271-333; these read KANVKTGKKRKFEANEAPVSGE and AAAV…ARKG. Residues 278 to 295 show a composition bias toward basic and acidic residues; sequence LREKKEKSERKGAKDQTR. Basic residues predominate over residues 324–333; the sequence is GANKAKARKG.

It belongs to the RRS1 family.

The protein localises to the nucleus. It localises to the nucleolus. Functionally, involved in ribosomal large subunit assembly. This chain is Ribosome biogenesis regulatory protein homolog, found in Caenorhabditis elegans.